We begin with the raw amino-acid sequence, 124 residues long: UPF0382 membrane protein HI_1073 (124 aa).

A run of 3 helical transmembrane segments spans residues 6–26 (LTLVALSGFFCVALGAFAAHG), 70–90 (SMSSWLIGILLFSGSLYALAF), and 95–115 (VIVWITPIGGTLFLIGWISLA).

Belongs to the UPF0382 family.

The protein localises to the cell membrane. This is UPF0382 membrane protein HI_1073 from Haemophilus influenzae (strain ATCC 51907 / DSM 11121 / KW20 / Rd).